The primary structure comprises 513 residues: MGCSVLLLTITVSTLGGLVFGYELGIISGALPQLQTHFSLGCVQQEAVVSALLIGSLFASIIGGWLIDRHGRRTSILLSNLLILAGSVILTTGTSFFALVIGRAVIGFAMTVSSMSCCIFVSEMVTPERRGLMVTLYEVGITVGILIAYAVNYIFNNVPLTGWRYMFGFAIIPSLIQLASIVLLPKQAEVFVIHDDDSRQADRLTEETETSNQHQQSEKYGVSDLFKSKDNMRRRTVIGVGLVLSQQFTGQPNVLFYASTILFSVGFQSNASAILASVGFGIVKVIATLLAMLCSDRAGRRSLLIGGCSMLAVGLILTGFLCRQSVIDTTKRCTSVGPHSNLTLSAEHDEGVGFSSQTLDVHEHLRSFSQSEDIYKWIIFTCLMAVVSAFSVSFGPMTWVVLSEIFPKDIRGRAFSFINCFNVGANLIVSFSFLSIIDVIGLSGVFLMYGVVGIAGVVFIYLVLPETKGKSLQDIDRELSQTRMIHRQELCSIFQRRRFSPGYQRVQLTSTAT.

The Cytoplasmic segment spans residues 1 to 6 (MGCSVL). Residues 7 to 27 (LLTITVSTLGGLVFGYELGII) traverse the membrane as a helical segment. The Extracellular portion of the chain corresponds to 28-46 (SGALPQLQTHFSLGCVQQE). The helical transmembrane segment at 47–67 (AVVSALLIGSLFASIIGGWLI) threads the bilayer. The Cytoplasmic portion of the chain corresponds to 68–80 (DRHGRRTSILLSN). A helical transmembrane segment spans residues 81–101 (LLILAGSVILTTGTSFFALVI). The Extracellular segment spans residues 102–104 (GRA). A helical transmembrane segment spans residues 105-125 (VIGFAMTVSSMSCCIFVSEMV). Residues 126 to 130 (TPERR) are Cytoplasmic-facing. A helical transmembrane segment spans residues 131–151 (GLMVTLYEVGITVGILIAYAV). Over 152–164 (NYIFNNVPLTGWR) the chain is Extracellular. The helical transmembrane segment at 165–185 (YMFGFAIIPSLIQLASIVLLP) threads the bilayer. The Cytoplasmic segment spans residues 186 to 236 (KQAEVFVIHDDDSRQADRLTEETETSNQHQQSEKYGVSDLFKSKDNMRRRT). Residues 237-257 (VIGVGLVLSQQFTGQPNVLFY) traverse the membrane as a helical segment. A D-glucose-binding site is contributed by 246-247 (QQ). Over 258-272 (ASTILFSVGFQSNAS) the chain is Extracellular. The N-linked (GlcNAc...) asparagine glycan is linked to N270. A helical membrane pass occupies residues 273–293 (AILASVGFGIVKVIATLLAML). Residues 294–301 (CSDRAGRR) lie on the Cytoplasmic side of the membrane. A helical transmembrane segment spans residues 302-322 (SLLIGGCSMLAVGLILTGFLC). Over 323–376 (RQSVIDTTKRCTSVGPHSNLTLSAEHDEGVGFSSQTLDVHEHLRSFSQSEDIYK) the chain is Extracellular. An N-linked (GlcNAc...) asparagine glycan is attached at N341. The chain crosses the membrane as a helical span at residues 377–397 (WIIFTCLMAVVSAFSVSFGPM). The Cytoplasmic segment spans residues 398–422 (TWVVLSEIFPKDIRGRAFSFINCFN). Residue W399 participates in D-glucose binding. 2 consecutive transmembrane segments (helical) span residues 423–443 (VGAN…IGLS) and 444–464 (GVFL…YLVL). Residues 465–513 (PETKGKSLQDIDRELSQTRMIHRQELCSIFQRRRFSPGYQRVQLTSTAT) lie on the Cytoplasmic side of the membrane.

It belongs to the major facilitator superfamily. Sugar transporter (TC 2.A.1.1) family. Glucose transporter subfamily.

It localises to the endomembrane system. The protein localises to the cytoplasm. The protein resides in the perinuclear region. The enzyme catalyses D-glucose(out) = D-glucose(in). Facilitative glucose transporter required for the development of the cardiovascular system. This is Solute carrier family 2, facilitated glucose transporter member 10 from Danio rerio (Zebrafish).